The sequence spans 58 residues: Weak neurotoxin D2B (58 aa).

Disulfide bonds link C3–C24, C17–C41, and C43–C54.

In terms of tissue distribution, expressed by the venom gland.

It is found in the secreted. In terms of biological role, binds to muscle nicotinic acetylcholine receptor (nAChR) and inhibit acetylcholine from binding to the receptor, thereby impairing neuromuscular transmission. This chain is Weak neurotoxin D2B, found in Micrurus pyrrhocryptus (Coral snake).